We begin with the raw amino-acid sequence, 222 residues long: Transmembrane protein 54 (222 aa).

A run of 4 helical transmembrane segments spans residues 22–42 (LVLVVLGHVSFITAALFHGTV), 62–82 (ILSVTSAIVVITSGIAAIVLS), 100–120 (ACALLSLTCALGLLASIAMTF), and 155–175 (SSLCLWGIALVLCVAENVFAV).

Belongs to the TMEM54 family. In terms of tissue distribution, ubiquitously expressed in cancer cell lines.

It is found in the membrane. The polypeptide is Transmembrane protein 54 (TMEM54) (Homo sapiens (Human)).